The sequence spans 365 residues: DNA replication and repair protein RecF (365 aa).

30-37 (GNNGMGKT) contributes to the ATP binding site.

This sequence belongs to the RecF family.

It localises to the cytoplasm. In terms of biological role, the RecF protein is involved in DNA metabolism; it is required for DNA replication and normal SOS inducibility. RecF binds preferentially to single-stranded, linear DNA. It also seems to bind ATP. The sequence is that of DNA replication and repair protein RecF from Parabacteroides distasonis (strain ATCC 8503 / DSM 20701 / CIP 104284 / JCM 5825 / NCTC 11152).